The primary structure comprises 91 residues: Alpha-defensin-related sequence 2 (91 aa).

Residues 1-19 form the signal peptide; sequence MKKLVLLFALVLLAFQVQA. Positions 20–58 are excised as a propeptide; that stretch reads DSIQNTDEETKTEEQPGEKDQAVSVSFGDPQGSALQDAA. The segment at 22 to 48 is disordered; that stretch reads IQNTDEETKTEEQPGEKDQAVSVSFGD. A compositionally biased stretch (basic and acidic residues) spans 27 to 40; the sequence is EETKTEEQPGEKDQ. A run of 7 repeats spans residues 65 to 67, 68 to 70, 71 to 73, 74 to 76, 77 to 79, 80 to 82, and 83 to 85. The interval 65–85 is 7 X 3 AA tandem repeats of C-P-X; the sequence is CPQCPRCPSCPSCPRCPRCPR.

It belongs to the alpha-defensin family. Small bowel, spleen, colon, kidney, liver, stomach and femur marrow.

The protein resides in the secreted. In terms of biological role, apparent precursor of a secreted, cationic, proline- and cysteine-rich peptide that contains Cys-Pro-Xaa repeats. Unlike cryptdin, the proposed mature peptide region lacks the structural motif characteristic of defensins. It may have microbicidal activities. This is Alpha-defensin-related sequence 2 (Defa-rs2) from Mus musculus (Mouse).